Consider the following 306-residue polypeptide: MSEPKTSATSETQTGTMTVKTGLAQMLKGGIIMDVINADQARVAEEAGACAVMALEKVPADIRKDGGVARMADPRKIKEIMDTVTVPVMAKCRIGHFAEAQILQNLGVDFIDESEVLSPADDENHVDKQPFNVPFVCGARSLGEALRRISEGAAMIRTKGEAGTGNVVEAVRHARQINREIRVAQCLSSAELYGYAKQLGVPLDLLQKTAKLGRLPVVNFAAGGLATPADVSLLMQLGVDGVFVGSGIFKSGNPEKRAKAMVQAVTHYNDPKVLADVSEDLGDPMVGLNCEHLSEKWAQRESVHKS.

D34 contributes to the D-ribose 5-phosphate binding site. The active-site Schiff-base intermediate with D-ribose 5-phosphate is K91. Position 163 (G163) interacts with D-ribose 5-phosphate. R175 serves as a coordination point for D-glyceraldehyde 3-phosphate. Residues G224 and 245-246 (GS) each bind D-ribose 5-phosphate.

This sequence belongs to the PdxS/SNZ family.

The enzyme catalyses aldehydo-D-ribose 5-phosphate + D-glyceraldehyde 3-phosphate + L-glutamine = pyridoxal 5'-phosphate + L-glutamate + phosphate + 3 H2O + H(+). It functions in the pathway cofactor biosynthesis; pyridoxal 5'-phosphate biosynthesis. Its function is as follows. Catalyzes the formation of pyridoxal 5'-phosphate from ribose 5-phosphate (RBP), glyceraldehyde 3-phosphate (G3P) and ammonia. The ammonia is provided by PDX2. Can also use ribulose 5-phosphate and dihydroxyacetone phosphate as substrates, resulting from enzyme-catalyzed isomerization of RBP and G3P, respectively. Also plays an indirect role in resistance to singlet oxygen-generating photosensitizers. This chain is Pyridoxal 5'-phosphate synthase subunit SNZERR (SNZERR), found in Suberites domuncula (Sponge).